The chain runs to 85 residues: uncharacterized protein (85 aa).

Disordered stretches follow at residues 1 to 22 (MFAP…TSGF) and 41 to 85 (EKER…SFLR). Positions 75–85 (FPSNYRGSFLR) are enriched in polar residues.

This is an uncharacterized protein from Dryophytes versicolor (chameleon treefrog).